Reading from the N-terminus, the 71-residue chain is Brevinin-1SN1 (71 aa).

The N-terminal stretch at 1-22 (MFTMKKPLLLLFFLGTINLSLC) is a signal peptide. Residues 23-45 (EEERNADEEEKRDGDDEMDAEVE) constitute a propeptide, removed in mature form. A disulfide bond links cysteine 65 and cysteine 71.

This sequence belongs to the frog skin active peptide (FSAP) family. Brevinin subfamily. Expressed by the skin glands.

The protein localises to the secreted. Its function is as follows. Antimicrobial peptide. Active against some Gram-negative and a variety of Gram-positive bacterial strains. Active against fungus C.glabrata 090902 but not against C.albicans ATCC 10231. Shows hemolytic activity against human erythrocytes. The polypeptide is Brevinin-1SN1 (Sylvirana spinulosa (Fine-spined frog)).